A 467-amino-acid polypeptide reads, in one-letter code: MSNTFEESLKSMSLDYLNLLINGQAFSDVTFSVEGRLVHAHRCILAARSLFFRKFFCESDPSQPGAEPANQTGSGARAAAVGGVIPVNSVGYEVFLLLLQFLYSGQVSIVPHKHEPRSNCGDRGCWHTHCTAAVDLSLDILAAARYFGVEQLALLTQKHLTSMVEKASIEDVMKVLIASRKQDMHQLWTTCSYLIAKSGLPQEILAKHLPIELVAKIEELRLKSSMPLRSLMPHHHDLTSTLDLEDQKIRRMRRALDSSDVELVKLMVMGEGLNLDESLALIYAVENCSREVVKALLELGAADVNYPAGPTGKTALHIAAEMVSPDMVAVLLDHHADPNVQTVDGITPLDILRTLTSDFLFKGAIPGLTHIEPNKLRLCLELVQSAALVISREEGNNNSNDNNTMIYPRMKDEHTSGSSLDSRLVYLNLGATNRDIGDDNSNQREGMNLHHHHHDPSTMYHHHHHHF.

One can recognise a BTB domain in the interval 27–111; sequence SDVTFSVEGR…LYSGQVSIVP (85 aa). The C2HC NPR-type zinc-finger motif lies at 117 to 131; the sequence is RSNCGDRGCWHTHCT. Residues Cys120, Cys125, His127, and Cys130 each contribute to the Zn(2+) site. 4 ANK repeats span residues 247-276, 277-306, 311-340, and 344-378; these read QKIRRMRRALDSSDVELVKLMVMGEGLNLD, ESLALIYAVENCSREVVKALLELGAADVNY, TGKTALHIAAEMVSPDMVAVLLDHHADPNV, and DGITPLDILRTLTSDFLFKGAIPGLTHIEPNKLRL. The tract at residues 434 to 467 is disordered; that stretch reads RDIGDDNSNQREGMNLHHHHHDPSTMYHHHHHHF. The segment covering 449–467 has biased composition (basic residues); that stretch reads LHHHHHDPSTMYHHHHHHF.

Belongs to the plant 'ANKYRIN-BTB/POZ' family. 'NOOT-BOP-COCH-like' (NBCL) subfamily. As to quaternary structure, homodimer or heterodimer with BOP2. Interacts with PAN.

It localises to the cytoplasm. The protein resides in the nucleus. Its pathway is protein modification; protein ubiquitination. Its function is as follows. May act as a substrate-specific adapter of an E3 ubiquitin-protein ligase complex (CUL3-RBX1-BTB) which mediates the ubiquitination and subsequent proteasomal degradation of target proteins. Acts redundantly with BOP2. BOP1/2 promote leaf and floral meristem fate and determinacy in a pathway targeting AP1 and AGL24. BOP1/2 act as transcriptional co-regulators through direct interaction with TGA factors, including PAN, a direct regulator of AP1. Controls lateral organ fate through positive regulation of adaxial-abaxial polarity genes ATHB-14/PHB, YAB1/FIL and YAB3, and through positive regulation of LOB domain-containing genes LOB, LBD6/AS2 and LBD36. Promotes and maintains a developmentally determinate state in leaf cells through the negative regulation of JAG, JGL and class I KNOX genes. Is also involved in nectary development, formation of normal abscission zones (AZs) and suppression of bract formation, probably by regulating the cell wall disorganization. The sequence is that of Regulatory protein NPR6 from Arabidopsis thaliana (Mouse-ear cress).